The sequence spans 147 residues: UPF0306 protein YhbP (147 aa).

The protein belongs to the UPF0306 family.

The chain is UPF0306 protein YhbP from Salmonella agona (strain SL483).